The primary structure comprises 219 residues: Guanylate kinase (219 aa).

Residues 15–194 (GLMFVLSSPS…AFAEVHSILK (180 aa)) enclose the Guanylate kinase-like domain. Position 22-29 (22-29 (SPSGAGKT)) interacts with ATP.

Belongs to the guanylate kinase family.

It is found in the cytoplasm. The enzyme catalyses GMP + ATP = GDP + ADP. Essential for recycling GMP and indirectly, cGMP. This chain is Guanylate kinase, found in Rhodopseudomonas palustris (strain BisB18).